The primary structure comprises 551 residues: uncharacterized protein (551 aa).

Residues 1–11 show a composition bias toward polar residues; the sequence is MRRVSLPNQLN. Disordered stretches follow at residues 1 to 22 and 523 to 551; these read MRRVSLPNQLNETRRRSPTRGE and CDPTVDASGYEPHDQQPQQQQQQQQQAFH. Basic and acidic residues predominate over residues 12–22; sequence ETRRRSPTRGE. Over residues 537–551 the composition is skewed to low complexity; the sequence is QQPQQQQQQQQQAFH.

The protein to Synechocystis PCC 6803 sll0335 and to M.tuberculosis Rv2567.

This is an uncharacterized protein from Mycobacterium bovis (strain ATCC BAA-935 / AF2122/97).